Reading from the N-terminus, the 368-residue chain is MSSATTMGQLPQHQTAIVAQGPGQMTIQKDAPVPALAHDMVLVKTATVAINPVDVKSLDYSPAPGAIIGFDFAGTIVALGSDAVKEGRLAVGDRVAGVVYGMDRLQPDVGAFAQYVGALADLVLKLPDHISLEDAAALGLATATAAYGLFKEMELPGALDRLSSSVPDRGDFVLVAGGSTATGTRAIELLKTAGFRPVATSSPSNFELVKKFGAEAVFDYHDPGCADAIKAYTNNELDYALDCIAEAETTQLCYAAIGRAGGRYVAVEPFRESIAQSRINTVKASWFNVMTVWGRKVELGGEYAREASLEDREFGARSFAAVQALLDRGYVTTHPIKLMSGGWEGVVEGVAKIRSQPPSGYKLVCQVA.

53–56 (VDVK) provides a ligand contact to NADP(+). Substrate is bound at residue 140–147 (LATATAAY). NADP(+)-binding positions include 179–182 (STAT), 202–205 (SPSN), Tyr-220, and 267–268 (VE). Residue 289-293 (VMTVW) participates in substrate binding. Residue 358-359 (PS) coordinates NADP(+).

It belongs to the zinc-containing alcohol dehydrogenase family. Monomer.

It carries out the reaction malate + 6 malonyl-CoA + acetyl-CoA + 2 AH2 + 2 S-adenosyl-L-methionine + 5 NADPH + 9 H(+) = trihazone A + 2 A + 2 S-adenosyl-L-homocysteine + 6 CO2 + 5 NADP(+) + 7 CoA + 6 H2O. It participates in secondary metabolite biosynthesis. Its function is as follows. Trans-enoyl reductase; part of the gene cluster that produces the tetronate natural products trihazones. The PKS-NRPS synthetase thnA with the help of the trans-enoyl reductase thnE are responsible for the synthesis of the carboxylmethyl containing trihazone A. The PKS portion of thnA synthesizes beta-keto-triene chain from one acetyl-CoA and 6 equivalents of malonyl-CoA, in collaboration with thnE, which selectively reduces the enoyl intermediate during the first and fourth iteration of the PKS. The NRPS domain selects and activates malate, of which the alpha-hydroxyl group attacks the completed polyketide acyl-S-ACP chain to form the ester product. Intramolecular Dieckmann cyclization catalyzed by the terminal reductase domain releases the product as trihazone A from the PKS-NPRS. The pathway begins with the formation of trihazone A by the hybrid PKS-NRPS synthetase thnA and the trans-enoyl reductase thnE. Trihazone A is further decarboxylated by the 2-oxoglutarate-dependent dioxygenase thnC to produce trihazone D. The function of the FAD-dependent monooxygenase thnD has still to be identified. This Trichoderma harzianum (Hypocrea lixii) protein is Trans-enoyl reductase thnE.